The sequence spans 188 residues: Ribosomal RNA small subunit methyltransferase G (188 aa).

S-adenosyl-L-methionine contacts are provided by residues Gly69, Phe74, 119–120, and Arg134; that span reads VQ.

This sequence belongs to the methyltransferase superfamily. RNA methyltransferase RsmG family.

It is found in the cytoplasm. It catalyses the reaction guanosine(527) in 16S rRNA + S-adenosyl-L-methionine = N(7)-methylguanosine(527) in 16S rRNA + S-adenosyl-L-homocysteine. In terms of biological role, specifically methylates the N7 position of guanine in position 527 of 16S rRNA. This is Ribosomal RNA small subunit methyltransferase G from Campylobacter jejuni (strain RM1221).